The sequence spans 119 residues: Large ribosomal subunit protein bL19 (119 aa).

The protein belongs to the bacterial ribosomal protein bL19 family.

Functionally, this protein is located at the 30S-50S ribosomal subunit interface and may play a role in the structure and function of the aminoacyl-tRNA binding site. This chain is Large ribosomal subunit protein bL19, found in Saccharopolyspora erythraea (strain ATCC 11635 / DSM 40517 / JCM 4748 / NBRC 13426 / NCIMB 8594 / NRRL 2338).